Reading from the N-terminus, the 343-residue chain is tRNA N6-adenosine threonylcarbamoyltransferase (343 aa).

2 residues coordinate Fe cation: His116 and His120. Substrate is bound by residues 138 to 142 (LVSGG), Asp172, Gly185, Asp189, and Asn277. Residue Asp305 coordinates Fe cation.

It belongs to the KAE1 / TsaD family. The cofactor is Fe(2+).

Its subcellular location is the cytoplasm. The catalysed reaction is L-threonylcarbamoyladenylate + adenosine(37) in tRNA = N(6)-L-threonylcarbamoyladenosine(37) in tRNA + AMP + H(+). Its function is as follows. Required for the formation of a threonylcarbamoyl group on adenosine at position 37 (t(6)A37) in tRNAs that read codons beginning with adenine. Is involved in the transfer of the threonylcarbamoyl moiety of threonylcarbamoyl-AMP (TC-AMP) to the N6 group of A37, together with TsaE and TsaB. TsaD likely plays a direct catalytic role in this reaction. This Mycobacterium ulcerans (strain Agy99) protein is tRNA N6-adenosine threonylcarbamoyltransferase.